The sequence spans 1137 residues: MVELKMGDHNVEATTWDPGDSKDWSVPIKPLTEKWKLVPAFLQVKGLVKQHIDSFNHFINVDIKKIVKANELVTSGADPLFYLKYLDVRVGKPDIDDGFNITKATTPHECRLRDTTYSAPITVDIEYTRGTQRIKRNNLLIGRMPLMLRCSNCALTGKSEFELSKLNECPLDPGGYFVVRGQEKVILIQEQLSWNKMLTEDFNGVVQCQVTSSTHEKKSRTLVLSKHGKYYLKHNSMTDDIPIVVIFKALGVVSDQEIQSLIGIDSKSQNRFGASLIDAYNLKVFTQQRALEYMGSKLVVKRFQSATTKTPSEEARELLLTTILAHVPVDNFNLQMKAIYVSMMVRRVMAAELDKTLFDDRDYYGNKRLELAGSLLSMMFEDLFKRMNWELKTIADKNIPKVKAAQFDVVKHMRAAQITAGLESAISSGNWTIKRFKMERAGVTQVLSRLSYISALGMMTRVNSQFEKTRKVSGPRSLQPSQWGMLCPSDTPEGEACGLVKNLALMTHITTEVEERPVMIVAFNAGVEDIREVSGNPINNPNVFLVFINGNVLGLTLNHKHLVRNLRYMRRKGRMGSYVSVHTSYTQRCIYIHTDGGRLCRPYVIVENRRPLVKQHHLDELNRGIRKFDDFLLDGLIEYLDVNEENDSFIAWNEDQIEDRTTHLEIEPFTLLGVCAGLVPYPHHNQSPRNTYQCAMGKQAMGMIGYNQKNRIDSLMYNLVYPHAPMVKSKTIELTNFDKLPAGQNATVAVMSYSGYDIEDALILNKASIDRGYGRCLVYKNSKCTVKRYANQTFDRIMGPMKDALTNKVIFKHDVLDTDGIVAPGEQVQNKQIMINKEMPAVTSMNPLQGQSAQVPYTAVPISYKGPEPSYIERVMVSANAEEDFLIKILLRQTRIPEIGDKFSSRHGQKGVTGLIVEQEDMPFNDFGICPDMIMNPHGFPSRMTVGKTLELLGGKAGLLEGKFHYGTAFGGSKVEDIQAELERHGFNYVGKDFFYSGITGTPLEAYIYSGPVYYQKLKHMVQDKMHARARGPKAVLTRQPTQGRSREGGLRLGEMERDCLISYGASMLIMERLMISSDAFEVDVCRTCGRMAYCSWCHFCQSSANVSKISMPYACKLLFQELTSMNVVPKMILENY.

The segment at 1084–1099 (DVCRTCGRMAYCSWCH) adopts a C4-type zinc-finger fold. Zn(2+) contacts are provided by Cys-1086, Cys-1089, Cys-1098, and Cys-1101.

It belongs to the RNA polymerase beta chain family. As to quaternary structure, component of the RNA polymerase III (Pol III) complex consisting of 17 subunits.

Its subcellular location is the nucleus. It catalyses the reaction RNA(n) + a ribonucleoside 5'-triphosphate = RNA(n+1) + diphosphate. DNA-dependent RNA polymerase catalyzes the transcription of DNA into RNA using the four ribonucleoside triphosphates as substrates. Second largest core component of RNA polymerase III which synthesizes small RNAs, such as 5S rRNA and tRNAs. Proposed to contribute to the polymerase catalytic activity and forms the polymerase active center together with the largest subunit. Pol III is composed of mobile elements and Polr3B is part of the core element with the central large cleft and probably a clamp element that moves to open and close the cleft. The chain is DNA-directed RNA polymerase III subunit RPC2 from Drosophila melanogaster (Fruit fly).